The primary structure comprises 720 residues: DNA helicase II (720 aa).

The region spanning aspartate 8–threonine 286 is the UvrD-like helicase ATP-binding domain. Residues glycine 32–arginine 37 and arginine 284 contribute to the ATP site. The 278-residue stretch at serine 287–glycine 564 folds into the UvrD-like helicase C-terminal domain.

The protein belongs to the helicase family. UvrD subfamily.

It carries out the reaction Couples ATP hydrolysis with the unwinding of duplex DNA by translocating in the 3'-5' direction.. It catalyses the reaction ATP + H2O = ADP + phosphate + H(+). A helicase with DNA-dependent ATPase activity. Unwinds DNA duplexes with 3'-5' polarity. Translocates on single-stranded DNA with 3'-5' polarity. Initiates unwinding more efficiently from a nicked substrate than double-stranded DNA. Involved in the post-incision events of nucleotide excision repair and methyl-directed mismatch repair, and probably also in repair of alkylated DNA. This Escherichia coli (strain K12) protein is DNA helicase II.